The primary structure comprises 467 residues: Peroxisome proliferator-activated receptor alpha (467 aa).

A DNA-binding region (nuclear receptor) is located at residues 99–173 (NIECRICGDK…VGMSHNAIRF (75 aa)). 2 consecutive NR C4-type zinc fingers follow at residues 102–122 (CRICGDKASGYHYGVHACEGC) and 139–161 (CDRSCKIQKKNRNKCQYCRFHKC). The region spanning 239 to 466 (FVIHDMETLC…PLLQEIYRDM (228 aa)) is the NR LBD domain. The required for heterodimerization with RXRA stretch occupies residues 304–433 (DQVTLLKYGV…PKLLQKLADL (130 aa)).

It belongs to the nuclear hormone receptor family. NR1 subfamily. As to quaternary structure, heterodimer; with RXRA. This heterodimerization is required for DNA binding and transactivation activity. Interacts with NCOA3 coactivator. Interacts with CITED2; the interaction stimulates its transcriptional activity. Also interacts with PPARBP in vitro. Interacts with AKAP13, LPIN1, PRDM16 and coactivator NCOA6. Interacts with ASXL1 and ASXL2. Interacts with PER2. Interacts with SIRT1; the interaction seems to be modulated by NAD(+) levels. Interacts with CRY1 and CRY2. In hepatocytes, interacts with PAQR3 and HUWE1; the interactions promote PPARA poylubiquitination and HUWE1-mediated degradation. Ubiquitinated by E3 ubiquitin-protein ligase HUWE1; leading to proteasomal degradation. In terms of processing, phosphorylated.

It localises to the nucleus. Ligand-activated transcription factor. Key regulator of lipid metabolism. Activated by the endogenous ligand 1-palmitoyl-2-oleoyl-sn-glycerol-3-phosphocholine (16:0/18:1-GPC). Activated by oleylethanolamide, a naturally occurring lipid that regulates satiety. Receptor for peroxisome proliferators such as hypolipidemic drugs and fatty acids. Regulates the peroxisomal beta-oxidation pathway of fatty acids. Functions as a transcription activator for the ACOX1 and P450 genes. Transactivation activity requires heterodimerization with RXRA and is antagonized by NR2C2. May be required for the propagation of clock information to metabolic pathways regulated by PER2. The polypeptide is Peroxisome proliferator-activated receptor alpha (PPARA) (Cavia porcellus (Guinea pig)).